A 1700-amino-acid chain; its full sequence is Rho guanine nucleotide exchange factor 28 (1700 aa).

Residues 288–343 (TEKATMPSGAAETEEEVRNLESGRSPSEEEEDAKSIKSQVDGPSEHEDQDRLPLDR) are disordered. 2 positions are modified to phosphoserine: serine 312 and serine 314. Residues 330–343 (PSEHEDQDRLPLDR) are compositionally biased toward basic and acidic residues. Residue serine 478 is modified to Phosphoserine. Residues 483-532 (VADSEGEGGSEPPICYAVGSQSSPRTGLPSGDELDSFETNTEPDCNISRT) are disordered. Serine 623 bears the Phosphoserine mark. The segment at 651 to 698 (RHQFVPGTFSGVLQCSGCDKTLLGKESLQCANCKANTHKGCKDAVPPC) adopts a Phorbol-ester/DAG-type zinc-finger fold. The 196-residue stretch at 846–1041 (KRQDVIFELM…KDMIAAVDLK (196 aa)) folds into the DH domain. Positions 1095 to 1184 (ATGRFKDILA…NWMRRIQQAV (90 aa)) constitute a PH domain. Disordered stretches follow at residues 1184-1205 (VESCPEEEGGRTSESDEERRKA) and 1289-1328 (KMGDVSQSSEESPGGTVLMDTPSTQDVPASPTASLVTEGT). Basic and acidic residues predominate over residues 1191–1205 (EGGRTSESDEERRKA). The tract at residues 1292–1301 (DVSQSSEESP) is interaction with PTK2/FAK1; required for regulation of axonal branching and synapse formation. Residues 1309-1325 (TPSTQDVPASPTASLVT) show a composition bias toward polar residues. The interval 1369-1380 (IIQAIQNLTRLL) is mediates cytoplasmic retention and interaction with YWHAH. Positions 1421–1522 (QEKSRYLEKQ…RERQKMRVQQ (102 aa)) form a coiled coil. Residues 1421–1700 (QEKSRYLEKQ…DGAEENILYL (280 aa)) form an interaction with microtubules region. An RNA-binding region spans residues 1493-1524 (QLQEYQQSLERLREGQRMVERERQKMRVQQGL). Serine 1535 carries the post-translational modification Phosphoserine. Positions 1563-1576 (FINEAFGHMSLNTS) are mediates cytoplasmic retention and interaction with MAPK8IP1. Positions 1602 to 1700 (SESPTELKID…DGAEENILYL (99 aa)) are disordered. At serine 1604 the chain carries Phosphoserine. Residues 1647-1663 (DLDSFQSESSSPQDSNQ) are compositionally biased toward low complexity. Residues 1664-1675 (RGPQPQTLTTEA) show a composition bias toward polar residues.

As to quaternary structure, homooligomer; forms some cytoplasmic aggregates. Forms a complex with MAPK8 and MAPK8IP1. Interacts with RHOA. Interacts with microtubules. Interacts with YWHAE and YWHAH. Interacts with PTK2/FAK1. Interacts with NEFL. Interacts with CTNND2; prevents interaction with RHOA. Phosphorylated on tyrosine upon stimulation of cells by laminin. As to expression, highly enriched in the brain (at protein level). Also detected in lung and kidney.

It localises to the cytoplasm. The protein resides in the cell membrane. Functions as a RHOA-specific guanine nucleotide exchange factor regulating signaling pathways downstream of integrins and growth factor receptors. Functions in axonal branching, synapse formation and dendritic morphogenesis. Also functions in focal adhesion formation, cell motility and B-lymphocytes activation. May regulate NEFL expression and aggregation and play a role in apoptosis. This chain is Rho guanine nucleotide exchange factor 28 (Arhgef28), found in Mus musculus (Mouse).